A 769-amino-acid chain; its full sequence is MQSRLLPSGPGRRWISLRVPNTPQRRAFASTRFLFQDVFQSQLDDPSSAALFSSLQSSRAVPQTLTEKIVQKYAVGLPDGKFVKSGDYVTIAPHRIMTHDNSWPVALKFMSIGASKMHDPNQVVMTLDHDVQNKTEKNLQKYRQIEEFAKQHGVEFYPAGRGIGHQIMVEEGFAWPGTLVVASDSHSNTYGAVASVGTPIVRTDAASIWATGKTWWQIPPVAKVTFTGILPPGVTGKDVIVALCGLFDKDDVLNHAIEFTGSEETMRSLPMDSRLTIANMTTEWGALSGLFPMDGVLKGWLKGKATTAAMGLADGPFKTLAARNFTHPAIEQLFVNPLTADKGAKYAKELFLDLSTLSPYVSGPNSVKIATPLKELEAQDIKVDKAYLVSCTNSRASDIAAAAKVFKDAAEKNGGKVPKIADGVKFYIAAASIPEQLAAEGAGDWQTLLEAGATALPAGCGPCIGLGTGLLEPGEVGISASNRNFKGRMGSTEAKAYLGSPEIVAASALSGKLSGPGWYQPPEGWTEVVRGEGDGIREEDRMLNTEQALEKLLGQLDDLVADGEKRFAPEEKVEEEGGLTEVYPGFPERVSGEIVFCDADNLNTDAIYPGYWTYQDNVPVEKMAEVCMSNYDKEFASIAKEGDILVVGYNFGCGSSREQAATALLAKQIPLVVSGSFGNIFSRNSINNALMGLEVPRLVSRLREEFGDKQLTRRTGWTLTWDVRRSQIEIQEGQNGPKWTHKVGELPPNVQEIIAKGGLEKWVKNAIEA.

The transit peptide at 1-28 (MQSRLLPSGPGRRWISLRVPNTPQRRAF) directs the protein to the mitochondrion. Positions 391, 460, and 463 each coordinate [4Fe-4S] cluster.

The protein belongs to the aconitase/IPM isomerase family. [4Fe-4S] cluster serves as cofactor.

The protein resides in the mitochondrion. The enzyme catalyses (2R,3S)-homoisocitrate = cis-homoaconitate + H2O. The protein operates within amino-acid biosynthesis; L-lysine biosynthesis via AAA pathway; L-alpha-aminoadipate from 2-oxoglutarate: step 3/5. In terms of biological role, catalyzes the reversible hydration of cis-homoaconitate to (2R,3S)-homoisocitrate, a step in the alpha-aminoadipate pathway for lysine biosynthesis. This chain is Homoaconitase, mitochondrial (lysA), found in Aspergillus niger (strain ATCC MYA-4892 / CBS 513.88 / FGSC A1513).